The sequence spans 242 residues: Small ribosomal subunit protein uS2 (242 aa).

This sequence belongs to the universal ribosomal protein uS2 family.

The polypeptide is Small ribosomal subunit protein uS2 (Aeromonas salmonicida (strain A449)).